A 418-amino-acid chain; its full sequence is Tyrosine--tRNA ligase (418 aa).

Tyrosine 39 provides a ligand contact to L-tyrosine. The 'HIGH' region signature appears at 44–53 (CTAASLHVGH). The L-tyrosine site is built by tyrosine 176 and glutamine 180. Residues 236 to 240 (KMGKT) carry the 'KMSKS' region motif. Lysine 239 lines the ATP pocket. The 69-residue stretch at 350-418 (IGVLVAFAEK…KKKHVLLRLA (69 aa)) folds into the S4 RNA-binding domain.

It belongs to the class-I aminoacyl-tRNA synthetase family. TyrS type 1 subfamily. In terms of assembly, homodimer.

The protein resides in the cytoplasm. The enzyme catalyses tRNA(Tyr) + L-tyrosine + ATP = L-tyrosyl-tRNA(Tyr) + AMP + diphosphate + H(+). Functionally, catalyzes the attachment of tyrosine to tRNA(Tyr) in a two-step reaction: tyrosine is first activated by ATP to form Tyr-AMP and then transferred to the acceptor end of tRNA(Tyr). This Rhodopseudomonas palustris (strain ATCC BAA-98 / CGA009) protein is Tyrosine--tRNA ligase.